The following is a 152-amino-acid chain: Ribosome maturation factor RimP (152 aa).

It belongs to the RimP family.

It is found in the cytoplasm. Its function is as follows. Required for maturation of 30S ribosomal subunits. This is Ribosome maturation factor RimP from Yersinia enterocolitica serotype O:8 / biotype 1B (strain NCTC 13174 / 8081).